The following is a 275-amino-acid chain: MDQSMKPLLSPTERPRRHLTASVISFFLPNQFRLSTILCIGALLQTILCAVLPLRYAAVPCVTVLLISVLTTIQECFQPNTNSFMADVIRGRTTAQIPGKDGTHGREPGKGSVVVFHLGIQYNHPLGVFAPHMREISNRFLAMQQDILRRKDELGLLAVQNWRGSERDSGNTTLIKYFFKDVESIHKFAHEPLHKETWTYYNQHHPGHVGIFHETFITKDGGYESMYVNCHPILLGRGEVKVNNRKDGTEEWVGTLVSADTPGLKSFKARLGRDD.

It carries out the reaction prefumagillin + NADPH + 2 O2 = fumagillin + acetaldehyde + NADP(+) + H2O. The protein operates within secondary metabolite biosynthesis; terpenoid biosynthesis. In terms of biological role, monooxygenase; part of the gene cluster that mediates the biosynthesis of fumagillin, a meroterpenoid that has numerous biological activities including irreversible inhibition of human type 2 methionine aminopeptidase (METAP2). Within the pathway, the monooxygenase af470 catalyzes the oxidative cleavage of prefumagillin to yield the final compound of the pathway, fumagillin. The pathway begins with the conversion of farnesyl pyrophosphate (FPP) to beta-trans-bergamotene by the membrane-bound beta-trans-bergamotene synthase af520. The multifunctional cytochrome P450 monooxygenase af510 then converts beta-trans-bergamotene into 5-keto-demethoxyfumagillol via several oxydation steps. 5-keto-demethoxyfumagillol is then subjected to successive C-6 hydroxylation and O-methylation by the dioxygenase af480 and O-methyltransferase af390-400, respectively, to yield 5-keto-fumagillol, which is then stereoselectively reduced by the keto-reductase af490 to 5R-hydroxy-seco-sesquiterpene. The next step is the polyketide transferase af380-catalyzed transfer of a dodecapentaenoyl group synthesized by the polyketide synthase af370 onto 5R-hydroxy-seco-sesquiterpene which leads to the production of prefumagillin. Finally, oxidative cleavage by the monooxygenase af470 converts prefumagillin to fumagillin. The polypeptide is Monooxygenase af470 (Aspergillus fumigatus (strain ATCC MYA-4609 / CBS 101355 / FGSC A1100 / Af293) (Neosartorya fumigata)).